Here is a 258-residue protein sequence, read N- to C-terminus: DNA repair protein RecO (258 aa).

Belongs to the RecO family.

Involved in DNA repair and RecF pathway recombination. The protein is DNA repair protein RecO of Syntrophotalea carbinolica (strain DSM 2380 / NBRC 103641 / GraBd1) (Pelobacter carbinolicus).